A 167-amino-acid polypeptide reads, in one-letter code: Small heat shock protein C1 (167 aa).

The region spanning 59 to 167 is the sHSP domain; the sequence is SLYESNSIKS…EQEAREIVID (109 aa).

The protein belongs to the small heat shock protein (HSP20) family.

The chain is Small heat shock protein C1 (hspC1) from Rickettsia conorii (strain ATCC VR-613 / Malish 7).